Reading from the N-terminus, the 147-residue chain is Protein BUD31 homolog (147 aa).

The short motif at 8–12 (RRVRK) is the Nuclear localization signal element.

This sequence belongs to the BUD31 (G10) family. In terms of assembly, identified in the spliceosome C complex.

Its subcellular location is the nucleus. Its function is as follows. Involved in pre-mRNA splicing process. The polypeptide is Protein BUD31 homolog (Caenorhabditis elegans).